A 285-amino-acid polypeptide reads, in one-letter code: Chemotaxis protein LafT (285 aa).

The next 4 membrane-spanning stretches (helical) occupy residues 4 to 23 (FLGVLTILVCVFGGYMWAGG), 34 to 51 (FLIIIGAAAGSLIIGNPP), 171 to 191 (ALPGFGILAAVGGIIITMQAI), and 201 to 222 (HVAAALVGTFIGIFGCYCGLDP). Residues 223 to 285 (LSNAMAQRVK…MEKWLAEQEG (63 aa)) lie on the Cytoplasmic side of the membrane.

The protein belongs to the MotA family.

It localises to the cell inner membrane. Its function is as follows. Required for rotation of the flagellar motor. Probable transmembrane proton channel. This chain is Chemotaxis protein LafT (lafT), found in Vibrio parahaemolyticus serotype O3:K6 (strain RIMD 2210633).